Consider the following 236-residue polypeptide: uncharacterized protein (236 aa).

This is an uncharacterized protein from Saccharolobus islandicus (Sulfolobus islandicus).